The following is a 422-amino-acid chain: MDLESKVKKMGLGHEQGFGAPCLKCKDKCEGFELHFWRKICRNCKCGQEEHDVLTSNEEDRKVGKLFEDTKYTTLIAKLKNDGIPMYKRNVMILTNPVPAKKNISINTVTYEWAPPVQNQTLARQYMQMLPKEKQPVAGSEGAQYRKKQLAKQLPAHDQDPSKCHELSPNEVKQMEQFVKKYKNEALGVGDVKLPGELETKATDKNNVNSGDRSTSAAVGAMEDKSADQKASQYSCYRCKLNMKEGDPAVYAERAGYDKLWHPACFVCCTCSELLVDMIYFWKNGNLYCGRHYCDSEKPRCAGCDELIFSNEYTQAEGQNWHLKHFCCFDCDCVLAGEIYVMVNDKPVCRPCYVKKHAAICQGCHNAIDPEVQRVTYNNFNWHATQECFLCSCCSKCLIGQKFMPVEGMVFCSVECKKKMMS.

The 108-residue stretch at 92–199 (MILTNPVPAK…GDVKLPGELE (108 aa)) folds into the PET domain. The segment at 198-224 (LETKATDKNNVNSGDRSTSAAVGAMED) is disordered. Polar residues predominate over residues 205–217 (KNNVNSGDRSTSA). 3 consecutive LIM zinc-binding domains span residues 234-297 (YSCY…CDSE), 299-359 (PRCA…KHAA), and 362-422 (QGCH…KMMS).

Belongs to the prickle / espinas / testin family.

The protein resides in the cytoplasm. It localises to the cell junction. The protein localises to the focal adhesion. Scaffold protein that may play a role in cell adhesion, cell spreading and in the reorganization of the actin cytoskeleton. May play a role in the regulation of cell proliferation. May inhibit cell growth. The protein is Testin (TES) of Gallus gallus (Chicken).